A 461-amino-acid polypeptide reads, in one-letter code: Argininosuccinate lyase (461 aa).

This sequence belongs to the lyase 1 family. Argininosuccinate lyase subfamily.

Its subcellular location is the cytoplasm. The enzyme catalyses 2-(N(omega)-L-arginino)succinate = fumarate + L-arginine. It participates in amino-acid biosynthesis; L-arginine biosynthesis; L-arginine from L-ornithine and carbamoyl phosphate: step 3/3. The polypeptide is Argininosuccinate lyase (Nitrosomonas eutropha (strain DSM 101675 / C91 / Nm57)).